We begin with the raw amino-acid sequence, 538 residues long: Bifunctional purine biosynthesis protein PurH (538 aa).

Residues 8–158 (IPAPDKVQVK…KNHAYVTTLT (151 aa)) form the MGS-like domain.

Belongs to the PurH family.

The enzyme catalyses (6R)-10-formyltetrahydrofolate + 5-amino-1-(5-phospho-beta-D-ribosyl)imidazole-4-carboxamide = 5-formamido-1-(5-phospho-D-ribosyl)imidazole-4-carboxamide + (6S)-5,6,7,8-tetrahydrofolate. It catalyses the reaction IMP + H2O = 5-formamido-1-(5-phospho-D-ribosyl)imidazole-4-carboxamide. It functions in the pathway purine metabolism; IMP biosynthesis via de novo pathway; 5-formamido-1-(5-phospho-D-ribosyl)imidazole-4-carboxamide from 5-amino-1-(5-phospho-D-ribosyl)imidazole-4-carboxamide (10-formyl THF route): step 1/1. The protein operates within purine metabolism; IMP biosynthesis via de novo pathway; IMP from 5-formamido-1-(5-phospho-D-ribosyl)imidazole-4-carboxamide: step 1/1. In Rhizobium rhizogenes (strain K84 / ATCC BAA-868) (Agrobacterium radiobacter), this protein is Bifunctional purine biosynthesis protein PurH.